The following is a 314-amino-acid chain: Basic endochitinase (314 aa).

A signal peptide spans 1–20 (MGLWALVAFCLLSLILVGSA). Residues 21–61 (EQCGGQAGGRVCPGGACCSKFGWCGNTADYCGSGCQSQCSS) enclose the Chitin-binding type-1 domain. Disulfide bonds link Cys-23/Cys-38, Cys-32/Cys-44, Cys-37/Cys-51, Cys-55/Cys-59, Cys-86/Cys-148, Cys-160/Cys-168, and Cys-267/Cys-299. Glu-130 acts as the Proton donor in catalysis.

Belongs to the glycosyl hydrolase 19 family. Chitinase class I subfamily.

The catalysed reaction is Random endo-hydrolysis of N-acetyl-beta-D-glucosaminide (1-&gt;4)-beta-linkages in chitin and chitodextrins.. Functionally, defense against chitin-containing fungal pathogens. This chain is Basic endochitinase (CHIT1B), found in Vitis vinifera (Grape).